A 275-amino-acid chain; its full sequence is AA9 family lytic polysaccharide monooxygenase AA9-X282 (275 aa).

The signal sequence occupies residues M1–A17. Residue H18 coordinates Cu(2+). T20 is modified (phosphothreonine). Phosphoserine occurs at positions 43 and 49. Position 50 is a phosphothreonine (T50). S58 carries the phosphoserine modification. C66 and C185 are disulfide-bonded. H96 lines the Cu(2+) pocket. Phosphoserine is present on S130. O2-binding residues include H171 and Q180. Residue Y182 coordinates Cu(2+). The X282 extension stretch occupies residues T236–P265. The short motif at G268–A275 is the 9res motif element.

This sequence belongs to the polysaccharide monooxygenase AA9 family. The cofactor is Cu(2+).

Its subcellular location is the secreted. The enzyme catalyses [(1-&gt;4)-beta-D-glucosyl]n+m + reduced acceptor + O2 = 4-dehydro-beta-D-glucosyl-[(1-&gt;4)-beta-D-glucosyl]n-1 + [(1-&gt;4)-beta-D-glucosyl]m + acceptor + H2O.. Lytic polysaccharide monooxygenase (LPMO) that depolymerizes crystalline and amorphous polysaccharides via the oxidation of scissile alpha- or beta-(1-4)-glycosidic bonds, yielding C1 oxidation products. Catalysis by LPMOs requires the reduction of the active-site copper from Cu(II) to Cu(I) by a reducing agent and H(2)O(2) or O(2) as a cosubstrate. Shows only weak binding properties to cellulose, and low cellulolytic oxidative activity which questions the involvement of X282 extension-containing AA9 proteins in the degradation of plant cell wall and opens new avenues as to the divergence of function of some AA9 members. In Trametes coccinea (strain BRFM310) (Pycnoporus coccineus), this protein is AA9 family lytic polysaccharide monooxygenase AA9-X282.